We begin with the raw amino-acid sequence, 503 residues long: Lysine--tRNA ligase (503 aa).

2 residues coordinate Mg(2+): E413 and E420.

The protein belongs to the class-II aminoacyl-tRNA synthetase family. As to quaternary structure, homodimer. Mg(2+) serves as cofactor.

The protein resides in the cytoplasm. It catalyses the reaction tRNA(Lys) + L-lysine + ATP = L-lysyl-tRNA(Lys) + AMP + diphosphate. This chain is Lysine--tRNA ligase, found in Actinobacillus succinogenes (strain ATCC 55618 / DSM 22257 / CCUG 43843 / 130Z).